Consider the following 504-residue polypeptide: UDP-N-acetylmuramoylalanine--D-glutamate ligase (504 aa).

Position 132-138 (132-138) interacts with ATP; it reads GTNGKTT. The interval 284–310 is disordered; that stretch reads AQDRDATDEPAPTRRRKSESTAPPDIG.

Belongs to the MurCDEF family.

The protein localises to the cytoplasm. It carries out the reaction UDP-N-acetyl-alpha-D-muramoyl-L-alanine + D-glutamate + ATP = UDP-N-acetyl-alpha-D-muramoyl-L-alanyl-D-glutamate + ADP + phosphate + H(+). It functions in the pathway cell wall biogenesis; peptidoglycan biosynthesis. Cell wall formation. Catalyzes the addition of glutamate to the nucleotide precursor UDP-N-acetylmuramoyl-L-alanine (UMA). This is UDP-N-acetylmuramoylalanine--D-glutamate ligase from Paraburkholderia phymatum (strain DSM 17167 / CIP 108236 / LMG 21445 / STM815) (Burkholderia phymatum).